The following is a 217-amino-acid chain: Probable transaldolase (217 aa).

The active-site Schiff-base intermediate with substrate is the lysine 83.

Belongs to the transaldolase family. Type 3B subfamily.

It localises to the cytoplasm. It carries out the reaction D-sedoheptulose 7-phosphate + D-glyceraldehyde 3-phosphate = D-erythrose 4-phosphate + beta-D-fructose 6-phosphate. It participates in carbohydrate degradation; pentose phosphate pathway; D-glyceraldehyde 3-phosphate and beta-D-fructose 6-phosphate from D-ribose 5-phosphate and D-xylulose 5-phosphate (non-oxidative stage): step 2/3. In terms of biological role, transaldolase is important for the balance of metabolites in the pentose-phosphate pathway. This chain is Probable transaldolase, found in Rhizorhabdus wittichii (strain DSM 6014 / CCUG 31198 / JCM 15750 / NBRC 105917 / EY 4224 / RW1) (Sphingomonas wittichii).